A 197-amino-acid chain; its full sequence is Peptide deformylase (197 aa).

Residues C106 and H148 each coordinate Fe cation. E149 is a catalytic residue. H152 is a binding site for Fe cation.

Belongs to the polypeptide deformylase family. Requires Fe(2+) as cofactor.

It carries out the reaction N-terminal N-formyl-L-methionyl-[peptide] + H2O = N-terminal L-methionyl-[peptide] + formate. Its function is as follows. Removes the formyl group from the N-terminal Met of newly synthesized proteins. Requires at least a dipeptide for an efficient rate of reaction. N-terminal L-methionine is a prerequisite for activity but the enzyme has broad specificity at other positions. This chain is Peptide deformylase, found in Mycobacterium marinum (strain ATCC BAA-535 / M).